Consider the following 1093-residue polypeptide: Semaphorin-5B (1093 aa).

Residues 1–19 (MVVPGPLALSLLLSSLTLL) form the signal peptide. Residues 20–978 (VSHLSSSQDI…TSCGGFNLIH (959 aa)) lie on the Extracellular side of the membrane. In terms of domain architecture, Sema spans 45-495 (HPIVAFEDLK…LSDRVLRVPL (451 aa)). N59 and N95 each carry an N-linked (GlcNAc...) asparagine glycan. 2 disulfides stabilise this stretch: C114/C124 and C141/C150. 3 N-linked (GlcNAc...) asparagine glycosylation sites follow: N157, N178, and N287. Cystine bridges form between C264-C367 and C288-C330. 6 N-linked (GlcNAc...) asparagine glycosylation sites follow: N333, N378, N532, N539, N547, and N602. TSP type-1 domains are found at residues 551 to 605 (DGGF…NCSR), 606 to 662 (NGAW…TPCP), 664 to 713 (PIFW…EACP), 721 to 776 (WTPW…ACDT), 795 to 850 (NGGW…QACP), 852 to 907 (RGAW…QACP), and 908 to 952 (EGWS…RPCP). Intrachain disulfides connect C618–C655, C622–C661, C633–C645, C676–C707, C680–C712, and C691–C697. An N-linked (GlcNAc...) asparagine glycan is attached at N728. 6 disulfides stabilise this stretch: C807/C844, C811/C849, C822/C834, C864/C901, C868/C906, and C879/C891. Residue N944 is glycosylated (N-linked (GlcNAc...) asparagine). The helical transmembrane segment at 979–999 (LIVTGVSCFLVSGLLTLAVYL) threads the bilayer. Residues 1000 to 1093 (SCQHCQRQSQ…SPGQRCFPNS (94 aa)) lie on the Cytoplasmic side of the membrane.

Belongs to the semaphorin family. In adult, only detected in brain.

The protein localises to the membrane. Functionally, may act as a positive axonal guidance cue. This Mus musculus (Mouse) protein is Semaphorin-5B (Sema5b).